The sequence spans 440 residues: Enolase (440 aa).

Gln-163 contributes to the (2R)-2-phosphoglycerate binding site. Glu-205 acts as the Proton donor in catalysis. 3 residues coordinate Mg(2+): Asp-242, Glu-288, and Asp-315. 4 residues coordinate (2R)-2-phosphoglycerate: Lys-340, Arg-369, Ser-370, and Lys-391. Lys-340 serves as the catalytic Proton acceptor.

It belongs to the enolase family. Mg(2+) serves as cofactor.

It is found in the cytoplasm. The protein resides in the secreted. Its subcellular location is the cell surface. The catalysed reaction is (2R)-2-phosphoglycerate = phosphoenolpyruvate + H2O. The protein operates within carbohydrate degradation; glycolysis; pyruvate from D-glyceraldehyde 3-phosphate: step 4/5. Its function is as follows. Catalyzes the reversible conversion of 2-phosphoglycerate (2-PG) into phosphoenolpyruvate (PEP). It is essential for the degradation of carbohydrates via glycolysis. This is Enolase from Limosilactobacillus fermentum (strain NBRC 3956 / LMG 18251) (Lactobacillus fermentum).